Reading from the N-terminus, the 313-residue chain is MTQWYPASPALWQGRDDSIEAPDARRLFQTVTRSETFFPENWQQKIALMGFACDEGVKRNSGRPGAAGAPDALRKALANMASHQGHERLVDLGNWVAPTPDLEGAQQALRDAVSRCLRAGMRTLVLGGGHETAFGHGAGVLDAFAQESVGIINLDAHLDLRQTDRATSGTPFRQLAQLCDAQSRAFHYACFGVSRAANTQALWREAQWRNVTVVEDLDCHDALAQMTQFIDKVDKIYLTIDLDVLPVWEMPAVSAPAALGVPLIQVLRLIEPVCRSGKLQAADLVEFNPRFDEDGAAARVAARLGWQIAHWWR.

The Mn(2+) site is built by histidine 130, aspartate 155, histidine 157, aspartate 159, aspartate 241, and aspartate 243.

This sequence belongs to the arginase family. Requires Mn(2+) as cofactor.

The enzyme catalyses N-formimidoyl-L-glutamate + H2O = formamide + L-glutamate. It functions in the pathway amino-acid degradation; L-histidine degradation into L-glutamate; L-glutamate from N-formimidoyl-L-glutamate (hydrolase route): step 1/1. Catalyzes the conversion of N-formimidoyl-L-glutamate to L-glutamate and formamide. In Salmonella choleraesuis (strain SC-B67), this protein is Formimidoylglutamase.